A 170-amino-acid polypeptide reads, in one-letter code: MFYPVVQVLIGIILVIILILGFYHMKHKPPKKKCKTDTDCKDKGHHCVRGTCTDKSCLEAAKQDIKDIKLDPTIRSCDYAPGFYRFNATTADLQSPFGKTRIDLGRVWTTWSKEDEYCQSLCLQRKGSIGWEFDELSLGGVGNCYCYTNSHPVLKNSNNTTVMGIARNVL.

Residue M1 is a topological domain, intravirion. The helical transmembrane segment at 2–22 (FYPVVQVLIGIILVIILILGF) threads the bilayer. Residues 23–170 (YHMKHKPPKK…TVMGIARNVL (148 aa)) lie on the Virion surface side of the membrane.

It belongs to the asfivirus envelope protein p22 family.

Its subcellular location is the virion membrane. The protein localises to the host cell membrane. This Ornithodoros (relapsing fever ticks) protein is Envelope protein 166.